A 322-amino-acid chain; its full sequence is N-acetyl-gamma-glutamyl-phosphate reductase (322 aa).

Cys132 is a catalytic residue.

It belongs to the NAGSA dehydrogenase family. Type 1 subfamily.

Its subcellular location is the cytoplasm. The enzyme catalyses N-acetyl-L-glutamate 5-semialdehyde + phosphate + NADP(+) = N-acetyl-L-glutamyl 5-phosphate + NADPH + H(+). It functions in the pathway amino-acid biosynthesis; L-arginine biosynthesis; N(2)-acetyl-L-ornithine from L-glutamate: step 3/4. In terms of biological role, catalyzes the NADPH-dependent reduction of N-acetyl-5-glutamyl phosphate to yield N-acetyl-L-glutamate 5-semialdehyde. In Bacteroides thetaiotaomicron (strain ATCC 29148 / DSM 2079 / JCM 5827 / CCUG 10774 / NCTC 10582 / VPI-5482 / E50), this protein is N-acetyl-gamma-glutamyl-phosphate reductase.